Here is a 312-residue protein sequence, read N- to C-terminus: Putative olfactory receptor 1F2 (312 aa).

Residues 1 to 25 lie on the Extracellular side of the membrane; it reads MERDKPVSVSEFLLLGLSRQPQQQH. The helical transmembrane segment at 26 to 49 threads the bilayer; it reads LLFVFFLSMYLATVLGNLLIILAI. Over 50–57 the chain is Cytoplasmic; that stretch reads SIDSRLHT. The helical transmembrane segment at 58-78 threads the bilayer; sequence PMYFFLSNMSFVDNCFSTTVP. Residues 79 to 99 lie on the Extracellular side of the membrane; it reads KMLANHILRTQTISFSGCLMQ. Residues Cys96 and Cys188 are joined by a disulfide bond. Residues 100–119 form a helical membrane-spanning segment; the sequence is MYFISELADMDNFLLAVMAY. At 120–138 the chain is on the cytoplasmic side; that stretch reads DRFVAVCRPLHYTAKMIHQ. Residues 139 to 157 traverse the membrane as a helical segment; it reads LCALLVTGSWVVANSNALL. Over 158–195 the chain is Extracellular; it reads HTLLMARLSFCADNTIPHIFCDVTPLLKLSCSDTHLSE. A helical membrane pass occupies residues 196–218; the sequence is VMILTEAALVTITPFLCLLASYM. Over 219 to 235 the chain is Cytoplasmic; sequence HITCVVLRVPSTKGRWK. The helical transmembrane segment at 236–258 threads the bilayer; that stretch reads AFSTCGSHLAVVLLFYGTIMSPY. Over 259-271 the chain is Extracellular; that stretch reads FRTSSSHSAQRDI. A helical membrane pass occupies residues 272 to 291; sequence AAAVRFTVVTPVMNPLIYSL. The Cytoplasmic segment spans residues 292–312; sequence RNKDIKGALVKVVAVKFFSVQ.

Belongs to the G-protein coupled receptor 1 family.

It localises to the cell membrane. Functionally, odorant receptor. The protein is Putative olfactory receptor 1F2 (OR1F2P) of Homo sapiens (Human).